The sequence spans 899 residues: DNA mismatch repair protein MutS (899 aa).

The disordered stretch occupies residues 1 to 20 (MGLQKKTDPEQAQADSAASR). ATP is bound at residue 631-638 (GPNMGGKS). Residues 832-852 (PPTPDDDEDDFGAAPSAVPAP) form a disordered region. The segment covering 843–852 (GAAPSAVPAP) has biased composition (low complexity).

Belongs to the DNA mismatch repair MutS family.

In terms of biological role, this protein is involved in the repair of mismatches in DNA. It is possible that it carries out the mismatch recognition step. This protein has a weak ATPase activity. The sequence is that of DNA mismatch repair protein MutS from Cupriavidus necator (strain ATCC 17699 / DSM 428 / KCTC 22496 / NCIMB 10442 / H16 / Stanier 337) (Ralstonia eutropha).